We begin with the raw amino-acid sequence, 460 residues long: Probable amino acid transporter skat-1 (460 aa).

10 consecutive transmembrane segments (helical) span residues 64–84, 132–152, 172–192, 194–214, 236–256, 270–290, 316–336, 362–382, 383–403, and 426–446; these read LGGL…NWYG, FVNV…ILFI, MILM…FTEM, IVSF…AVIM, TITM…ILPI, FGVL…LGFF, VNVF…YVVY, GFRV…PKLE, IMIP…FPPF, and IFIN…GVYT.

The protein belongs to the amino acid/polyamine transporter 2 family. As to expression, expressed in the head, tail, body and ventral nerve cord neurons, muscles of the vulva, and intestine.

The protein localises to the membrane. The protein resides in the cytoplasmic granule. Plays a role in the accumulation of vital dyes and endogenous fluorescent compounds in lysosome related organelles. Has an effect on lysosome related organelle (LRO) function, in a pathway with serotonin. This chain is Probable amino acid transporter skat-1, found in Caenorhabditis elegans.